The sequence spans 221 residues: MDIIKFDVYRGPNIGVYISVNDNTILLPMGFAKTKAEKLAKYLGVNYLFTSIANTRLIGALCIMNNKGILLPKTAYQNEFDFLKKELDLEVGVLDSKLTALGNVICANDKGAVVSPWLSKEDCQTISDVLGVETIQKKIAGFNQTGVVMVANNSGAAIHPEADEEDMKTFSNLLGVKIEQSSINNGIPYVSSGILANNNCIIVGSLTTGPEIMMLTRAFLN.

The protein belongs to the eIF-6 family.

Functionally, binds to the 50S ribosomal subunit and prevents its association with the 30S ribosomal subunit to form the 70S initiation complex. This Nitrosopumilus maritimus (strain SCM1) protein is Translation initiation factor 6.